We begin with the raw amino-acid sequence, 239 residues long: Geranylgeranylglyceryl phosphate synthase (239 aa).

Lys13 serves as a coordination point for sn-glycerol 1-phosphate. Positions 15 and 42 each coordinate Mg(2+). Sn-glycerol 1-phosphate contacts are provided by residues 162-167 (YIEYSG), Gly192, and 212-213 (GD).

Belongs to the GGGP/HepGP synthase family. Group I subfamily. Mg(2+) is required as a cofactor.

It localises to the cytoplasm. The catalysed reaction is sn-glycerol 1-phosphate + (2E,6E,10E)-geranylgeranyl diphosphate = sn-3-O-(geranylgeranyl)glycerol 1-phosphate + diphosphate. The protein operates within membrane lipid metabolism; glycerophospholipid metabolism. In terms of biological role, prenyltransferase that catalyzes the transfer of the geranylgeranyl moiety of geranylgeranyl diphosphate (GGPP) to the C3 hydroxyl of sn-glycerol-1-phosphate (G1P). This reaction is the first ether-bond-formation step in the biosynthesis of archaeal membrane lipids. This Haloquadratum walsbyi (strain DSM 16790 / HBSQ001) protein is Geranylgeranylglyceryl phosphate synthase.